A 371-amino-acid chain; its full sequence is tRNA-specific 2-thiouridylase MnmA (371 aa).

ATP-binding positions include 9-16 (AMSGGVDS) and Met35. Cys109 functions as the Nucleophile in the catalytic mechanism. A disulfide bond links Cys109 and Cys207. Position 133 (Gly133) interacts with ATP. Positions 157-159 (KDQ) are interaction with tRNA. The active-site Cysteine persulfide intermediate is Cys207.

This sequence belongs to the MnmA/TRMU family.

The protein localises to the cytoplasm. The enzyme catalyses S-sulfanyl-L-cysteinyl-[protein] + uridine(34) in tRNA + AH2 + ATP = 2-thiouridine(34) in tRNA + L-cysteinyl-[protein] + A + AMP + diphosphate + H(+). Catalyzes the 2-thiolation of uridine at the wobble position (U34) of tRNA, leading to the formation of s(2)U34. The chain is tRNA-specific 2-thiouridylase MnmA from Solibacter usitatus (strain Ellin6076).